A 358-amino-acid polypeptide reads, in one-letter code: Heme A synthase (358 aa).

8 consecutive transmembrane segments (helical) span residues 22 to 42 (IQVWLYSILLLCLAIVLVGGA), 107 to 127 (VLGRLVGLVALLGLIWFWATK), 133 to 153 (ILFPLIVVPILIAFQGFIGWW), 172 to 192 (LAFHLITACLVIIFVTYLSRG), 208 to 228 (FAAWLVILVLIEIYLGALVAG), 269 to 289 (FIHRFFAYFLFIVSALHAFYV), 302 to 322 (AFLIFFIIIIQAILGILTLLH), and 324 to 344 (VPISLGLIHQSMALVVLCFAV). A heme-binding site is contributed by histidine 271. Histidine 332 contacts heme.

It belongs to the COX15/CtaA family. Type 2 subfamily. In terms of assembly, interacts with CtaB. The cofactor is heme b.

It is found in the cell membrane. The catalysed reaction is Fe(II)-heme o + 2 A + H2O = Fe(II)-heme a + 2 AH2. It participates in porphyrin-containing compound metabolism; heme A biosynthesis; heme A from heme O: step 1/1. Its function is as follows. Catalyzes the conversion of heme O to heme A by two successive hydroxylations of the methyl group at C8. The first hydroxylation forms heme I, the second hydroxylation results in an unstable dihydroxymethyl group, which spontaneously dehydrates, resulting in the formyl group of heme A. This is Heme A synthase from Bartonella tribocorum (strain CIP 105476 / IBS 506).